Consider the following 156-residue polypeptide: Small ribosomal subunit protein uS7 (156 aa).

Belongs to the universal ribosomal protein uS7 family. As to quaternary structure, part of the 30S ribosomal subunit. Contacts proteins S9 and S11.

One of the primary rRNA binding proteins, it binds directly to 16S rRNA where it nucleates assembly of the head domain of the 30S subunit. Is located at the subunit interface close to the decoding center, probably blocks exit of the E-site tRNA. The sequence is that of Small ribosomal subunit protein uS7 from Chlorobaculum tepidum (strain ATCC 49652 / DSM 12025 / NBRC 103806 / TLS) (Chlorobium tepidum).